We begin with the raw amino-acid sequence, 372 residues long: MLDIKQLVKTYDNGHQAVKGVDLSIHQGEFIVLVGPSGCGKSSILRSIAGLESITSGEIHLAGRRVDNEKPANRDIAMVFQNYALYPHMSVYDNLAYGLKNRGVDKQTIAAKIAKVAKTLKIEEYLDRKPAKLSGGQRQRVAMGRAIVRDPQLFLFDEPLSNLDAALRAHMRLEIKKLQRELGVTSVYVTHDQVEAMTLADRIVVVKQGEIEQVGTPAEVYHQPASTFVASFIGSPAMNFLPASIKQGQLHIAGKHCYLPQFDAMSSENITLGIRPEHASLHPLTNAIELKLDIQVVEPLGPNQLVHGKIIGLESEQDFIAVTAEIPLDVHQTLPIWVALEQLHLFDQQGKRFVQSHRSCTQSSKVASTRQQ.

Residues 2–233 (LDIKQLVKTY…PASTFVASFI (232 aa)) enclose the ABC transporter domain. An ATP-binding site is contributed by 35-42 (GPSGCGKS).

This sequence belongs to the ABC transporter superfamily. sn-glycerol-3-phosphate importer (TC 3.A.1.1.3) family. The complex is composed of two ATP-binding proteins (UgpC), two transmembrane proteins (UgpA and UgpE) and a solute-binding protein (UgpB).

The protein localises to the cell inner membrane. It carries out the reaction sn-glycerol 3-phosphate(out) + ATP + H2O = sn-glycerol 3-phosphate(in) + ADP + phosphate + H(+). Functionally, part of the ABC transporter complex UgpBAEC involved in sn-glycerol-3-phosphate (G3P) import. Responsible for energy coupling to the transport system. This Vibrio cholerae serotype O1 (strain ATCC 39315 / El Tor Inaba N16961) protein is sn-glycerol-3-phosphate import ATP-binding protein UgpC.